The chain runs to 859 residues: DNA mismatch repair protein MutS (859 aa).

617-624 (GPNMGGKS) lines the ATP pocket.

It belongs to the DNA mismatch repair MutS family.

This protein is involved in the repair of mismatches in DNA. It is possible that it carries out the mismatch recognition step. This protein has a weak ATPase activity. This is DNA mismatch repair protein MutS from Stutzerimonas stutzeri (strain A1501) (Pseudomonas stutzeri).